Here is a 410-residue protein sequence, read N- to C-terminus: Peptidase T (410 aa).

Histidine 78 contacts Zn(2+). The active site involves aspartate 80. Aspartate 139 serves as a coordination point for Zn(2+). The active-site Proton acceptor is glutamate 173. 3 residues coordinate Zn(2+): glutamate 174, aspartate 196, and histidine 378.

It belongs to the peptidase M20B family. The cofactor is Zn(2+).

Its subcellular location is the cytoplasm. The catalysed reaction is Release of the N-terminal residue from a tripeptide.. Cleaves the N-terminal amino acid of tripeptides. This chain is Peptidase T, found in Shewanella woodyi (strain ATCC 51908 / MS32).